The sequence spans 391 residues: Carbamoyl phosphate synthase small chain (391 aa).

The tract at residues Met-1 to Asp-189 is CPSase. 3 residues coordinate L-glutamine: Ser-47, Gly-241, and Gly-243. The 188-residue stretch at His-193 to Ser-380 folds into the Glutamine amidotransferase type-1 domain. Cys-269 (nucleophile) is an active-site residue. 5 residues coordinate L-glutamine: Leu-270, Gln-273, Asn-311, Gly-313, and Phe-314. Catalysis depends on residues His-353 and Glu-355.

This sequence belongs to the CarA family. Composed of two chains; the small (or glutamine) chain promotes the hydrolysis of glutamine to ammonia, which is used by the large (or ammonia) chain to synthesize carbamoyl phosphate. Tetramer of heterodimers (alpha,beta)4.

It carries out the reaction hydrogencarbonate + L-glutamine + 2 ATP + H2O = carbamoyl phosphate + L-glutamate + 2 ADP + phosphate + 2 H(+). The enzyme catalyses L-glutamine + H2O = L-glutamate + NH4(+). It participates in amino-acid biosynthesis; L-arginine biosynthesis; carbamoyl phosphate from bicarbonate: step 1/1. Its pathway is pyrimidine metabolism; UMP biosynthesis via de novo pathway; (S)-dihydroorotate from bicarbonate: step 1/3. In terms of biological role, small subunit of the glutamine-dependent carbamoyl phosphate synthetase (CPSase). CPSase catalyzes the formation of carbamoyl phosphate from the ammonia moiety of glutamine, carbonate, and phosphate donated by ATP, constituting the first step of 2 biosynthetic pathways, one leading to arginine and/or urea and the other to pyrimidine nucleotides. The small subunit (glutamine amidotransferase) binds and cleaves glutamine to supply the large subunit with the substrate ammonia. This Yersinia pestis protein is Carbamoyl phosphate synthase small chain.